Consider the following 760-residue polypeptide: Elongation factor G, mitochondrial (760 aa).

The N-terminal 37 residues, 1–37 (MIRGMLPRGLRALRPSVSPTVVSSSLHRNFHSSIRRF), are a transit peptide targeting the mitochondrion. One can recognise a tr-type G domain in the interval 68–349 (SRLRNIGVSA…AVVDYLPQPN (282 aa)). GTP is bound by residues 77–84 (AHIDSGKT), 148–152 (DTPGH), and 202–205 (NKMD).

The protein belongs to the TRAFAC class translation factor GTPase superfamily. Classic translation factor GTPase family. EF-G/EF-2 subfamily.

The protein localises to the mitochondrion. It functions in the pathway protein biosynthesis; polypeptide chain elongation. Mitochondrial GTPase that catalyzes the GTP-dependent ribosomal translocation step during translation elongation. During this step, the ribosome changes from the pre-translocational (PRE) to the post-translocational (POST) state as the newly formed A-site-bound peptidyl-tRNA and P-site-bound deacylated tRNA move to the P and E sites, respectively. Catalyzes the coordinated movement of the two tRNA molecules, the mRNA and conformational changes in the ribosome. In Meyerozyma guilliermondii (strain ATCC 6260 / CBS 566 / DSM 6381 / JCM 1539 / NBRC 10279 / NRRL Y-324) (Yeast), this protein is Elongation factor G, mitochondrial.